The sequence spans 131 residues: Methylglyoxal synthase (131 aa).

The region spanning 1–131 is the MGS-like domain; sequence MKIALIAHDK…GDLDYRKFRK (131 aa). Substrate contacts are provided by residues histidine 8, lysine 12, 34–37, and 54–55; these read TGTT and SG. The active-site Proton donor/acceptor is the aspartate 60. Residue histidine 87 coordinates substrate.

It belongs to the methylglyoxal synthase family.

The enzyme catalyses dihydroxyacetone phosphate = methylglyoxal + phosphate. Catalyzes the formation of methylglyoxal from dihydroxyacetone phosphate. The sequence is that of Methylglyoxal synthase from Bacillus cytotoxicus (strain DSM 22905 / CIP 110041 / 391-98 / NVH 391-98).